A 624-amino-acid polypeptide reads, in one-letter code: Glutamine--fructose-6-phosphate aminotransferase [isomerizing] (624 aa).

Residue C2 is the Nucleophile; for GATase activity of the active site. The Glutamine amidotransferase type-2 domain maps to 2–226; the sequence is CGIVGYVGQQ…QDQAVVLTAD (225 aa). SIS domains follow at residues 297–436 and 469–614; these read SDQE…ARGT and LAQR…VDKP. Residue K619 is the For Fru-6P isomerization activity of the active site.

As to quaternary structure, homodimer.

The protein resides in the cytoplasm. The catalysed reaction is D-fructose 6-phosphate + L-glutamine = D-glucosamine 6-phosphate + L-glutamate. Its function is as follows. Catalyzes the first step in hexosamine metabolism, converting fructose-6P into glucosamine-6P using glutamine as a nitrogen source. The chain is Glutamine--fructose-6-phosphate aminotransferase [isomerizing] from Mycolicibacterium paratuberculosis (strain ATCC BAA-968 / K-10) (Mycobacterium paratuberculosis).